Here is a 268-residue protein sequence, read N- to C-terminus: Secreted RxLR effector protein 32 (268 aa).

The N-terminal stretch at 1 to 21 (MRGAYYVAFALLVAASTRTAA) is a signal peptide. The RxLR-dEER signature appears at 50–71 (RILRESPDPKDRLPVYASDEER). The tract at residues 120–257 (PKLEIKKSKR…PTPESLGIGG (138 aa)) is disordered. Over residues 148–161 (SNSKKSLVSSASAK) the composition is skewed to low complexity. The span at 212–224 (NLDKNKRPDEAKI) shows a compositional bias: basic and acidic residues.

It belongs to the RxLR effector family.

It is found in the secreted. Its subcellular location is the host cell. In terms of biological role, secreted effector that completely suppresses the host cell death induced by cell death-inducing proteins. The protein is Secreted RxLR effector protein 32 of Plasmopara viticola (Downy mildew of grapevine).